Reading from the N-terminus, the 459-residue chain is Argininosuccinate lyase (459 aa).

The protein belongs to the lyase 1 family. Argininosuccinate lyase subfamily.

The protein localises to the cytoplasm. It carries out the reaction 2-(N(omega)-L-arginino)succinate = fumarate + L-arginine. The protein operates within amino-acid biosynthesis; L-arginine biosynthesis; L-arginine from L-ornithine and carbamoyl phosphate: step 3/3. The chain is Argininosuccinate lyase from Prochlorococcus marinus (strain MIT 9301).